Reading from the N-terminus, the 424-residue chain is Endochitinase 1 (424 aa).

A signal peptide spans 1–22; sequence MPSLFAQSLAIIATLQATLGLA. The region spanning 39 to 402 is the GH18 domain; the sequence is YVNAVYFTNW…GTSSNKLGGP (364 aa). N-linked (GlcNAc...) asparagine glycans are attached at residues Asn-74, Asn-78, and Asn-96. Chitin-binding positions include 103 to 104 and 130 to 133; these read GN and GGWT. Glu-172 functions as the Proton donor in the catalytic mechanism. Residues Tyr-173 and 238 to 241 each bind chitin; that span reads MAYD. Asn-248 and Asn-347 each carry an N-linked (GlcNAc...) asparagine glycan. Residue Trp-379 coordinates chitin. The tract at residues 385–412 is disordered; the sequence is RQGPDSLIGTSSNKLGGPDTTENLLNYP. Residues 392-408 are compositionally biased toward polar residues; that stretch reads IGTSSNKLGGPDTTENL.

Belongs to the glycosyl hydrolase 18 family. Chitinase class V subfamily.

The protein resides in the secreted. It catalyses the reaction Random endo-hydrolysis of N-acetyl-beta-D-glucosaminide (1-&gt;4)-beta-linkages in chitin and chitodextrins.. Its function is as follows. Secreted chitinase involved in the degradation of chitin, a component of the cell walls of fungi and exoskeletal elements of some animals (including worms and arthropods). Participates in the infection process and directly acts in the penetration process of the host cuticle. This Metarhizium robertsii (strain ARSEF 23 / ATCC MYA-3075) (Metarhizium anisopliae (strain ARSEF 23)) protein is Endochitinase 1 (chit1).